Consider the following 81-residue polypeptide: Translational regulator CsrA (81 aa).

This sequence belongs to the CsrA/RsmA family. As to quaternary structure, homodimer; the beta-strands of each monomer intercalate to form a hydrophobic core, while the alpha-helices form wings that extend away from the core.

The protein resides in the cytoplasm. Functionally, a translational regulator that binds mRNA to regulate translation initiation and/or mRNA stability. Usually binds in the 5'-UTR at or near the Shine-Dalgarno sequence preventing ribosome-binding, thus repressing translation. Its main target seems to be the major flagellin gene, while its function is anatagonized by FliW. The chain is Translational regulator CsrA from Borreliella burgdorferi (strain ATCC 35210 / DSM 4680 / CIP 102532 / B31) (Borrelia burgdorferi).